Reading from the N-terminus, the 30-residue chain is GIPCAESCVWIPCTVTALLGCSCSNKVCYN.

Positions 1–30 (GIPCAESCVWIPCTVTALLGCSCSNKVCYN) form a cross-link, cyclopeptide (Gly-Asn). 3 disulfides stabilise this stretch: cysteine 4/cysteine 21, cysteine 8/cysteine 23, and cysteine 13/cysteine 28.

In terms of processing, this is a cyclic peptide. Expressed in roots.

Its function is as follows. Probably participates in a plant defense mechanism. The polypeptide is Root cyclotide 1 (Viola hederacea (Australian violet)).